Reading from the N-terminus, the 452-residue chain is Phosphoglucosamine mutase (452 aa).

Serine 108 (phosphoserine intermediate) is an active-site residue. The Mg(2+) site is built by serine 108, aspartate 247, aspartate 249, and aspartate 251. Serine 108 carries the post-translational modification Phosphoserine.

This sequence belongs to the phosphohexose mutase family. It depends on Mg(2+) as a cofactor. Post-translationally, activated by phosphorylation.

It catalyses the reaction alpha-D-glucosamine 1-phosphate = D-glucosamine 6-phosphate. Its function is as follows. Catalyzes the conversion of glucosamine-6-phosphate to glucosamine-1-phosphate. The protein is Phosphoglucosamine mutase of Burkholderia thailandensis (strain ATCC 700388 / DSM 13276 / CCUG 48851 / CIP 106301 / E264).